Here is a 472-residue protein sequence, read N- to C-terminus: Aspartyl/glutamyl-tRNA(Asn/Gln) amidotransferase subunit B (472 aa).

This sequence belongs to the GatB/GatE family. GatB subfamily. Heterotrimer of A, B and C subunits.

The catalysed reaction is L-glutamyl-tRNA(Gln) + L-glutamine + ATP + H2O = L-glutaminyl-tRNA(Gln) + L-glutamate + ADP + phosphate + H(+). The enzyme catalyses L-aspartyl-tRNA(Asn) + L-glutamine + ATP + H2O = L-asparaginyl-tRNA(Asn) + L-glutamate + ADP + phosphate + 2 H(+). Allows the formation of correctly charged Asn-tRNA(Asn) or Gln-tRNA(Gln) through the transamidation of misacylated Asp-tRNA(Asn) or Glu-tRNA(Gln) in organisms which lack either or both of asparaginyl-tRNA or glutaminyl-tRNA synthetases. The reaction takes place in the presence of glutamine and ATP through an activated phospho-Asp-tRNA(Asn) or phospho-Glu-tRNA(Gln). This is Aspartyl/glutamyl-tRNA(Asn/Gln) amidotransferase subunit B from Campylobacter jejuni subsp. jejuni serotype O:6 (strain 81116 / NCTC 11828).